A 934-amino-acid chain; its full sequence is MPKITMQQFQKNSYLADNNAGYIETLYENFLKDPHSVNEEWRSYFRTLTNGASTPDISHATIREEFRELARKPRSISPTAITPAAEQAAVDLLIEGYRRFGHLNAKINPLGDNRPVDSRLELGHYNLTESDFNKTFATYGLLNKPKATLKEIYTRLREIYCGSIGVQYSTISDERERNWLRDYVEQRLPSIEFDKETKRNILQQLVTAESLEKYLDTKYVGQVRYSLEGGDSLIPLLDELTKRARHQKIEEIVICMAHRGRVNVLLNIMGQSAAELFQEFEGKKDYGLMSGDVKYHRGYSRDVKTDAGPIHLSLAFNPSHLEFICPVAMGSVRARQERQNGHKRDYAMTVMIHGDASFSGEGIVMEALSMSQTRAHHVGGSIHIILNNQVGFTTSNPHDARSSMYCSDIAKMLDAPVFHVNGDDPEAVVAVTQLALDYRMAFHKDVFIDLVCYRRHGHQEVDDPMPTQPAMYKVIQEHPTTRTLYAKNLIEKKLCTAEEVDQWIDDYRDRLDRGRQLVETLPEGLSAHYAANWTPYLGQDWTTLVDTTLPLKKLKALGKKFSTLPNTLHLHRKVEAIYKARLEMAEGKTPMDWGFAEMLAYASLLEEGFSVRLVGQDSRRGTFFHRHAVVFDQETGKEYEPLKHLSDKQAAPHIYDSLLCEAGALGFEYGYSTADPNSLVIWEAQFGDFANVAQVIVDQFISSGWQKWNRLSGIVLFLPHGYEGKGPEHSSARLERYLQLCAQNNMQVCAPTTPSQIFHLLRRQVLRPYRKPLVVLTPKSVLRNKLAVSSLEDLARGQLKLLIPEIEKHDPKKITRVILCSGKVYYDLLAKRREHKGKLNHIAMIRIEQLYPFPYDELKAELEKYPNAKQVIWCQEEPKNQGAWFCTRHRLIKCMRDDQTLEYVGRSAFAAPAAGYSALYVKLQEQLVNQALEI.

This sequence belongs to the alpha-ketoglutarate dehydrogenase family. As to quaternary structure, homodimer. Part of the 2-oxoglutarate dehydrogenase (OGDH) complex composed of E1 (2-oxoglutarate dehydrogenase), E2 (dihydrolipoamide succinyltransferase) and E3 (dihydrolipoamide dehydrogenase); the complex contains multiple copies of the three enzymatic components (E1, E2 and E3). Thiamine diphosphate is required as a cofactor.

It catalyses the reaction N(6)-[(R)-lipoyl]-L-lysyl-[protein] + 2-oxoglutarate + H(+) = N(6)-[(R)-S(8)-succinyldihydrolipoyl]-L-lysyl-[protein] + CO2. Functionally, E1 component of the 2-oxoglutarate dehydrogenase (OGDH) complex which catalyzes the decarboxylation of 2-oxoglutarate, the first step in the conversion of 2-oxoglutarate to succinyl-CoA and CO(2). This chain is 2-oxoglutarate dehydrogenase E1 component (sucA), found in Coxiella burnetii (strain RSA 493 / Nine Mile phase I).